The chain runs to 1024 residues: Multidrug resistance protein MdtC (1024 aa).

12 helical membrane-spanning segments follow: residues 12–32, 333–353, 360–380, 387–407, 431–451, 463–483, 528–548, 853–873, 875–895, 897–917, 953–973, and 984–1004; these read VATTLLTLAITLSGVIGFSLL, EVERSLVIAVALVILVVFLFL, LIPAVAVPVSLIGTFTAMYLC, LSLMALTIATGFVVDDAIVVL, VGFTVLSMSISLVAVFIPLLL, FAVTLSVAIGISLVISLTLTP, WVMVVLLSTIALNVWLYISIP, LWLIMAAIATVYIVLGILYES, VHPLTILSTLPSAGVGALLAL, LFDAPFSLIALIGIMLLIGIV, PILMTTLAALFGALPLVISSG, and ITIVGGLVMSQLLTLYTTPVV.

This sequence belongs to the resistance-nodulation-cell division (RND) (TC 2.A.6) family. MdtC subfamily. Part of a tripartite efflux system composed of MdtA, MdtB and MdtC. MdtC forms a heteromultimer with MdtB.

The protein resides in the cell inner membrane. The polypeptide is Multidrug resistance protein MdtC (Yersinia enterocolitica serotype O:8 / biotype 1B (strain NCTC 13174 / 8081)).